The chain runs to 180 residues: Large ribosomal subunit protein uL5 (180 aa).

The protein belongs to the universal ribosomal protein uL5 family. Part of the 50S ribosomal subunit; part of the 5S rRNA/L5/L18/L25 subcomplex. Contacts the 5S rRNA and the P site tRNA. Forms a bridge to the 30S subunit in the 70S ribosome.

This is one of the proteins that bind and probably mediate the attachment of the 5S RNA into the large ribosomal subunit, where it forms part of the central protuberance. In the 70S ribosome it contacts protein S13 of the 30S subunit (bridge B1b), connecting the 2 subunits; this bridge is implicated in subunit movement. Contacts the P site tRNA; the 5S rRNA and some of its associated proteins might help stabilize positioning of ribosome-bound tRNAs. This is Large ribosomal subunit protein uL5 from Clostridium botulinum (strain Loch Maree / Type A3).